The sequence spans 316 residues: MTVGSPAVVIGILLSTVIVAAWLIWVERRMIGIWQDRLGPNRVGPLGLGQVVADMVKIFFKEDWIPPFADKPVFVIAPAIVMVTMLLGFVVVPFAPGVGVIDFNFGLLYFFALSSLAVYSQVLAGYASNNKYSLLGSLRAAAQSISYEVFMGLAAMGVVMLAGSFNLREIVEAQKDGWYVLPQFAGFLAFLVAAVAECHRAPFDLPEAEQEITGGFHTEYSGMKFGMFFVGEYLGITLNSAILVTLFFGGWLGPAFLPPLAWFILKTLVFILFFILLRAALARPRYDQLMSFGWKVMLPLTLANIVVTGAVGLSVP.

Helical transmembrane passes span 6-26 (PAVVIGILLSTVIVAAWLIWV), 74-94 (FVIAPAIVMVTMLLGFVVVPF), 98-118 (VGVIDFNFGLLYFFALSSLAV), 145-165 (ISYEVFMGLAAMGVVMLAGSF), 177-197 (GWYVLPQFAGFLAFLVAAVAE), 233-253 (YLGITLNSAILVTLFFGGWLG), 256-276 (FLPPLAWFILKTLVFILFFIL), and 296-316 (VMLPLTLANIVVTGAVGLSVP).

The protein belongs to the complex I subunit 1 family. In terms of assembly, NDH-1 is composed of 14 different subunits. Subunits NuoA, H, J, K, L, M, N constitute the membrane sector of the complex.

The protein resides in the cell inner membrane. The catalysed reaction is a quinone + NADH + 5 H(+)(in) = a quinol + NAD(+) + 4 H(+)(out). Functionally, NDH-1 shuttles electrons from NADH, via FMN and iron-sulfur (Fe-S) centers, to quinones in the respiratory chain. The immediate electron acceptor for the enzyme in this species is believed to be ubiquinone. Couples the redox reaction to proton translocation (for every two electrons transferred, four hydrogen ions are translocated across the cytoplasmic membrane), and thus conserves the redox energy in a proton gradient. This subunit may bind ubiquinone. The chain is NADH-quinone oxidoreductase subunit H from Methylococcus capsulatus (strain ATCC 33009 / NCIMB 11132 / Bath).